We begin with the raw amino-acid sequence, 151 residues long: Group 10 secretory phospholipase A2 (151 aa).

A signal peptide spans Met-1 to Ser-17. Residues Glu-18–Arg-28 constitute a propeptide that is removed on maturation. 8 cysteine pairs are disulfide-bonded: Cys-39-Cys-97, Cys-53-Cys-143, Cys-55-Cys-71, Cys-70-Cys-125, Cys-76-Cys-150, Cys-77-Cys-118, Cys-86-Cys-111, and Cys-104-Cys-116. 3 residues coordinate Ca(2+): Tyr-54, Gly-56, and Gly-58. His-74 is an active-site residue. Residue Asp-75 participates in Ca(2+) binding. Residue Asp-119 is part of the active site.

The protein belongs to the phospholipase A2 family. As to quaternary structure, interacts with PLA2R1; this interaction mediates PLA2G10 clearance and inactivation. Ca(2+) serves as cofactor. Expressed at high levels in testis and the gastrointestinal tract including stomach and colon. Expressed at lower levels in other tissues including small intestine, uterus, oviduct, lung, thymus, spleen and brain. Expressed in Paneth-like secretory epithelial cells of the colon. Expressed in gastric and ileac epithelial cells and in glandular epithelium of intestinal mucosa (at protein level). Expressed in late spermatogenic cells, spermatocytes and spermatids, but not spermatogonia in seminiferous tubules (at protein level). Expressed mainly in the apical side of endometrial epithelial cells and in the interstitium beneath the epithelium of uterus (at protein level). Expressed in resident spleen macrophages (at protein level). Expressed at outermost layer of hair follicles. Expressed in dorsal root ganglia in both NEFH-positive A-fibers and PRPH-positive C-fibers (at protein level).

It localises to the secreted. Its subcellular location is the lysosome. The protein resides in the cytoplasmic vesicle. The protein localises to the secretory vesicle. It is found in the acrosome. The catalysed reaction is a 1,2-diacyl-sn-glycero-3-phosphocholine + H2O = a 1-acyl-sn-glycero-3-phosphocholine + a fatty acid + H(+). It carries out the reaction 1-hexadecanoyl-2-(9Z-octadecenoyl)-sn-glycero-3-phosphocholine + H2O = 1-hexadecanoyl-sn-glycero-3-phosphocholine + (9Z)-octadecenoate + H(+). The enzyme catalyses 1-octadecanoyl-2-(5Z,8Z,11Z,14Z-eicosatetraenoyl)-sn-glycero-3-phosphocholine + H2O = 1-octadecanoyl-sn-glycero-3-phosphocholine + (5Z,8Z,11Z,14Z)-eicosatetraenoate + H(+). It catalyses the reaction 1,2-dihexadecanoyl-sn-glycero-3-phosphocholine + H2O = 1-hexadecanoyl-sn-glycero-3-phosphocholine + hexadecanoate + H(+). The catalysed reaction is 1-hexadecanoyl-2-(9Z-octadecenoyl)-sn-glycero-3-phosphoglycerol + H2O = 1-hexadecanoyl-sn-glycero-3-phosphoglycerol + (9Z)-octadecenoate + H(+). It carries out the reaction 1,2-dihexadecanoyl-sn-glycero-3-phospho-(1'-sn-glycerol) + H2O = 1-hexadecanoyl-sn-glycero-3-phospho-(1'-sn-glycerol) + hexadecanoate + H(+). The enzyme catalyses 1-hexadecanoyl-2-(9Z-octadecenoyl)-sn-glycero-3-phospho-L-serine + H2O = 1-hexadecanoyl-sn-glycero-3-phospho-L-serine + (9Z)-octadecenoate + H(+). It catalyses the reaction 1-hexadecanoyl-2-(9Z,12Z-octadecadienoyl)-sn-glycero-3-phosphoethanolamine + H2O = 1-hexadecanoyl-sn-glycero-3-phosphoethanolamine + (9Z,12Z)-octadecadienoate + H(+). The catalysed reaction is 1-hexadecanoyl-2-(9Z-octadecenoyl)-sn-glycero-3-phosphate + H2O = 1-hexadecanoyl-sn-glycero-3-phosphate + (9Z)-octadecenoate + H(+). It carries out the reaction 1-O-hexadecyl-2-acetyl-sn-glycero-3-phosphocholine + H2O = 1-O-hexadecyl-sn-glycero-3-phosphocholine + acetate + H(+). Its function is as follows. Secretory calcium-dependent phospholipase A2 that primarily targets extracellular phospholipids. Hydrolyzes the ester bond of the fatty acyl group attached at sn-2 position of phospholipids with preference for phosphatidylcholines and phosphatidylglycerols over phosphatidylethanolamines. Preferentially releases sn-2 omega-6 and omega-3 polyunsaturated fatty acyl (PUFA) chains over saturated fatty acyls. Contributes to phospholipid remodeling of very low-density lipoprotein (VLDL), low-density lipoprotein (LDL) and high-density lipoprotein (HDL) particles. Hydrolyzes LDL phospholipids releasing unsaturated fatty acids that regulate macrophage differentiation toward foam cells. Efficiently hydrolyzes and inactivates PAF, a potent lipid mediator present in oxidized LDL. May act in an autocrine and paracrine manner. Secreted by lung epithelium, targets membrane phospholipids of infiltrating eosinophils, releasing arachidonate and boosting eicosanoid and cysteinyl leukotriene synthesis involved in airway inflammatory response. Secreted by gut epithelium, hydrolyzes dietary and biliary phosphatidylcholines in the gastrointestinal lumen, thereby regulating adipogenesis and body weight. Plays a stem cell regulator role in colon epithelium. Within intracellular compartment, mediates Paneth-like cell differentiation and its stem cell supporting functions by inhibiting Wnt signaling pathway in intestinal stem cell (ISC). Secreted in the intestinal lumen upon inflammation, acts in an autocrine way and promotes prostaglandin E2 synthesis that stimulates the Wnt signaling pathway in ISCs and tissue regeneration. May participate in hair follicle morphogenesis by regulating phosphatidylethanolamines metabolism at the outermost epithelial layer and facilitating melanin synthesis. By generating lysophosphatidylcholines (LPCs) at sperm acrosome controls sperm cell capacitation, acrosome reaction and overall fertility. May promote neurite outgrowth in neuron fibers involved in nociception. Contributes to lipid remodeling of cellular membranes and generation of lipid mediators involved in pathogen clearance. Cleaves sn-2 fatty acyl chains of phosphatidylglycerols and phosphatidylethanolamines, which are major components of membrane phospholipids in bacteria. Displays bactericidal activity against Gram-positive bacteria by directly hydrolyzing phospholipids of the bacterial membrane. In pulmonary epithelium, may contribute to host defense response against adenoviral infection. Prevents adenovirus entry into host cells by hydrolyzing host cell plasma membrane, releasing C16:0 LPCs that inhibit virus-mediated membrane fusion and viral infection. Likely prevents adenoviral entry into the endosomes of host cells. May play a role in maturation and activation of innate immune cells including macrophages, group 2 innate lymphoid cells and mast cells. The protein is Group 10 secretory phospholipase A2 (Pla2g10) of Mus musculus (Mouse).